Consider the following 463-residue polypeptide: T-box transcription factor TBX1-A (463 aa).

Disordered regions lie at residues 39–58 (SPSP…PCSA) and 75–104 (GASS…VKKN). A compositionally biased stretch (low complexity) spans 75 to 96 (GASSSSCASSTPGSGSTGSSSS). Residues 119–297 (LWDEFNQLGT…SNPFAKGFRD (179 aa)) constitute a DNA-binding region (T-box). Disordered stretches follow at residues 320–354 (RSRN…PLHG) and 377–409 (VPLS…PYKY). A compositionally biased stretch (polar residues) spans 323–332 (NPVSSPTQNG). Basic and acidic residues predominate over residues 333–347 (SDKDGDGRREYERDA). A Nuclear localization signal motif is present at residues 420 to 431 (KTRPAPYPLPTI).

As to quaternary structure, binds DNA as a dimer. Interacts with dscr6/ripply3.

It localises to the nucleus. Probable transcriptional regulator involved in developmental processes. Binds to the palindromic T site 5'-TTCACACCTAGGTGTGAA-3' DNA sequence. Induces pre-placodal ectoderm (PPE) gene expression in regions where RIPPLY3 is absent. Plays a role in the formation of the anteroposterior (AP) axis during embryonic development; required to establish the posterolateral border of the pre-placodal ectoderm (PPE) acting downstream of the retinoic acid receptor (RAR) signaling. This Xenopus laevis (African clawed frog) protein is T-box transcription factor TBX1-A (tbx1-a).